A 103-amino-acid polypeptide reads, in one-letter code: Signal recognition particle 19 kDa protein (103 aa).

It belongs to the SRP19 family. As to quaternary structure, part of the signal recognition particle protein translocation system, which is composed of SRP and FtsY. Archaeal SRP consists of a 7S RNA molecule of 300 nucleotides and two protein subunits: SRP54 and SRP19.

It localises to the cytoplasm. Its function is as follows. Involved in targeting and insertion of nascent membrane proteins into the cytoplasmic membrane. Binds directly to 7S RNA and mediates binding of the 54 kDa subunit of the SRP. In Methanopyrus kandleri (strain AV19 / DSM 6324 / JCM 9639 / NBRC 100938), this protein is Signal recognition particle 19 kDa protein.